The primary structure comprises 860 residues: Leucine--tRNA ligase (860 aa).

A 'HIGH' region motif is present at residues 42–52 (PYPSGRLHMGH). The short motif at 619–623 (KMSKS) is the 'KMSKS' region element. Position 622 (K622) interacts with ATP.

The protein belongs to the class-I aminoacyl-tRNA synthetase family.

It localises to the cytoplasm. It catalyses the reaction tRNA(Leu) + L-leucine + ATP = L-leucyl-tRNA(Leu) + AMP + diphosphate. The protein is Leucine--tRNA ligase of Escherichia coli O7:K1 (strain IAI39 / ExPEC).